The sequence spans 68 residues: DNA-directed RNA polymerase subunit omega (68 aa).

It belongs to the RNA polymerase subunit omega family. In terms of assembly, the RNAP catalytic core consists of 2 alpha, 1 beta, 1 beta' and 1 omega subunit. When a sigma factor is associated with the core the holoenzyme is formed, which can initiate transcription.

The catalysed reaction is RNA(n) + a ribonucleoside 5'-triphosphate = RNA(n+1) + diphosphate. Functionally, promotes RNA polymerase assembly. Latches the N- and C-terminal regions of the beta' subunit thereby facilitating its interaction with the beta and alpha subunits. In Citrifermentans bemidjiense (strain ATCC BAA-1014 / DSM 16622 / JCM 12645 / Bem) (Geobacter bemidjiensis), this protein is DNA-directed RNA polymerase subunit omega.